The chain runs to 98 residues: Large ribosomal subunit protein uL23 (98 aa).

The protein belongs to the universal ribosomal protein uL23 family. As to quaternary structure, part of the 50S ribosomal subunit. Contacts protein L29, and trigger factor when it is bound to the ribosome.

One of the early assembly proteins it binds 23S rRNA. One of the proteins that surrounds the polypeptide exit tunnel on the outside of the ribosome. Forms the main docking site for trigger factor binding to the ribosome. The protein is Large ribosomal subunit protein uL23 of Bordetella avium (strain 197N).